The primary structure comprises 393 residues: Pectate lyase A (393 aa).

An N-terminal signal peptide occupies residues methionine 1–alanine 32. 4 residues coordinate Ca(2+): glutamate 174, aspartate 176, aspartate 216, and aspartate 220. Residue arginine 273 is part of the active site. The cysteines at positions 330 and 358 are disulfide-linked.

It belongs to the polysaccharide lyase 1 family. PLADES subfamily. Ca(2+) is required as a cofactor.

The protein localises to the secreted. It carries out the reaction Eliminative cleavage of (1-&gt;4)-alpha-D-galacturonan to give oligosaccharides with 4-deoxy-alpha-D-galact-4-enuronosyl groups at their non-reducing ends.. The protein operates within glycan metabolism; pectin degradation; 2-dehydro-3-deoxy-D-gluconate from pectin: step 2/5. In terms of biological role, involved in maceration and soft-rotting of plant tissue. This chain is Pectate lyase A (pelA), found in Dickeya chrysanthemi (Pectobacterium chrysanthemi).